The primary structure comprises 150 residues: SsrA-binding protein (150 aa).

Belongs to the SmpB family.

It is found in the cytoplasm. Required for rescue of stalled ribosomes mediated by trans-translation. Binds to transfer-messenger RNA (tmRNA), required for stable association of tmRNA with ribosomes. tmRNA and SmpB together mimic tRNA shape, replacing the anticodon stem-loop with SmpB. tmRNA is encoded by the ssrA gene; the 2 termini fold to resemble tRNA(Ala) and it encodes a 'tag peptide', a short internal open reading frame. During trans-translation Ala-aminoacylated tmRNA acts like a tRNA, entering the A-site of stalled ribosomes, displacing the stalled mRNA. The ribosome then switches to translate the ORF on the tmRNA; the nascent peptide is terminated with the 'tag peptide' encoded by the tmRNA and targeted for degradation. The ribosome is freed to recommence translation, which seems to be the essential function of trans-translation. The sequence is that of SsrA-binding protein from Campylobacter jejuni subsp. doylei (strain ATCC BAA-1458 / RM4099 / 269.97).